The primary structure comprises 319 residues: CCAAT/enhancer-binding protein homolog 1 (319 aa).

Positions 53-67 (SLTIAASLQQRDRER) are n' domain; required for axon regeneration. Residues 163–319 (TRRAVKRPVP…QRHILENFNK (157 aa)) are disordered. Basic and acidic residues predominate over residues 171 to 181 (VPYDDYQKEYS). The segment covering 182-198 (EESSDMTDNDGSVDDSY) has biased composition (acidic residues). 4 stretches are compositionally biased toward basic and acidic residues: residues 225 to 248 (LKADEEKAEPTYKLKRARNNDAVR), 255 to 274 (KELQDKKEAEHDKMKRRIAE), 281 to 291 (SERDARRRDQD), and 302 to 319 (PMKEQRMPQRHILENFNK). In terms of domain architecture, bZIP spans 233-308 (EPTYKLKRAR…NKGPMKEQRM (76 aa)). A basic motif region spans residues 237-271 (KLKRARNNDAVRKSRKKAKELQDKKEAEHDKMKRR). The segment at 275 to 308 (LEGLLQSERDARRRDQDTLEQLLRNKGPMKEQRM) is leucine-zipper.

The protein belongs to the bZIP family. C/EBP subfamily. As to quaternary structure, may interact with transcription factor ets-4. May interact (via N-terminus) with nipi-3. May interact (via N-terminus) with importin subunit alpha ima-3. In terms of tissue distribution, expressed in touch and motor neurons.

The protein localises to the synapse. It localises to the cytoplasm. Its subcellular location is the nucleus. The protein resides in the cell projection. It is found in the axon. Its function is as follows. Transcription factor. Binds to promoter regions of target genes, perhaps at the motif 5'-[AGCT]TT[AGT][TC]GAAA[ACT]-3'. Modulates expression of genes involved in development and in stress responses, including those regulating the p38/MAPK signaling pathways such as MAPKK sek-1 and phosphatase vhp-1. Involved in innate immunity. Plays a role in repressing the response to infection by the Gram-negative bacterium P.aeruginosa, perhaps acting independently of the pmk-1 or pmk-3 p38/MAPK pathways. However, also plays a protective role in the response to infection by P.aeruginosa. Required in axonal regrowth following injury and synaptogenesis. Following axon injury, in concert with transcription factor ets-4, activates expression of receptor tyrosine kinase svh-2. May function downstream of the Ca2+-activated p38/MAPK pathway to promote axon regeneration. Plays a role in modulating polymerization of neuronal microtubules. Involved in modulating lipid homeostasis. The sequence is that of CCAAT/enhancer-binding protein homolog 1 from Caenorhabditis elegans.